A 711-amino-acid polypeptide reads, in one-letter code: DNA topoisomerase 3 (711 aa).

One can recognise a Toprim domain in the interval 2–135; the sequence is KSLILAEKPS…LRRLWISSVT (134 aa). The Mg(2+) site is built by Glu8 and Asp104. A Topo IA-type catalytic domain is found at 152-580; sequence YNDLYYAALA…EMKDFTKDVV (429 aa). Residues 186–191 are interaction with DNA; the sequence is SLGRVQ. Tyr305 serves as the catalytic O-(5'-phospho-DNA)-tyrosine intermediate. The segment at 691-711 is disordered; the sequence is MNKNEGLDNNPFKDALKNLNL.

The protein belongs to the type IA topoisomerase family. Mg(2+) serves as cofactor.

It catalyses the reaction ATP-independent breakage of single-stranded DNA, followed by passage and rejoining.. Its function is as follows. Releases the supercoiling and torsional tension of DNA, which is introduced during the DNA replication and transcription, by transiently cleaving and rejoining one strand of the DNA duplex. Introduces a single-strand break via transesterification at a target site in duplex DNA. The scissile phosphodiester is attacked by the catalytic tyrosine of the enzyme, resulting in the formation of a DNA-(5'-phosphotyrosyl)-enzyme intermediate and the expulsion of a 3'-OH DNA strand. The free DNA strand then undergoes passage around the unbroken strand, thus removing DNA supercoils. Finally, in the religation step, the DNA 3'-OH attacks the covalent intermediate to expel the active-site tyrosine and restore the DNA phosphodiester backbone. This Staphylococcus aureus (strain MRSA252) protein is DNA topoisomerase 3.